Here is a 261-residue protein sequence, read N- to C-terminus: Small ribosomal subunit protein uS2 (261 aa).

The protein belongs to the universal ribosomal protein uS2 family.

The sequence is that of Small ribosomal subunit protein uS2 from Paracoccus denitrificans (strain Pd 1222).